The chain runs to 281 residues: HTH-type transcriptional activator RhaR (281 aa).

The region spanning 178–276 (DKLLAALAAS…GMSPGQWRQR (99 aa)) is the HTH araC/xylS-type domain. 2 DNA-binding regions (H-T-H motif) span residues 195–216 (ERFCEQEGGSERALRQQFRQQT) and 243–266 (IGDIAMQCGFEDSNYFSVVFSREI).

As to quaternary structure, binds DNA as a dimer.

The protein localises to the cytoplasm. Functionally, activates expression of the rhaSR operon in response to L-rhamnose. The polypeptide is HTH-type transcriptional activator RhaR (Klebsiella pneumoniae subsp. pneumoniae (strain ATCC 700721 / MGH 78578)).